Here is an 858-residue protein sequence, read N- to C-terminus: Heat shock protein 105 kDa (858 aa).

N-acetylserine is present on Ser2. An N6-acetyllysine modification is found at Lys471. Disordered regions lie at residues 500-585 and 801-858; these read KVPT…PPEA and VTQP…MDLD. Residues 504 to 515 show a composition bias toward acidic residues; it reads EEEDGSSLEADM. 2 positions are modified to phosphoserine: Ser509 and Ser510. The segment covering 533-549 has biased composition (polar residues); sequence QQDNSEAGTQPQVQTDG. Phosphoserine is present on Ser558. Position 562 is a phosphothreonine (Thr562). Composition is skewed to basic and acidic residues over residues 564–585 and 806–815; these read EESK…PPEA and PKIESPKLER. The residue at position 810 (Ser810) is a Phosphoserine. The residue at position 816 (Thr816) is a Phosphothreonine.

This sequence belongs to the heat shock protein 70 family. Interacts with HSPA8/HSC70. Interacts with HSPA1A (via NBD) and HSPA1B (via NBD). Phosphorylation on Ser-509 may be important for regulation of the HSPA8/HSC70 chaperone activity. Expressed in neurons in the cerebrum and Purkinje cells in the cerebellum (at protein level). Expressed in testis and no expression or only low-level expression in liver, spleen, lung, and kidney (at protein level). Highly expressed in the brain and moderately expressed in lung, heart, thymus, spleen, liver, and small intestine.

It localises to the cytoplasm. The protein localises to the nucleus. Its function is as follows. Acts as a nucleotide-exchange factor (NEF) for chaperone proteins HSPA1A and HSPA1B, promoting the release of ADP from HSPA1A/B thereby triggering client/substrate protein release. Prevents the aggregation of denatured proteins in cells under severe stress, on which the ATP levels decrease markedly. Inhibits HSPA8/HSC70 ATPase and chaperone activities. The protein is Heat shock protein 105 kDa (Hsph1) of Mus musculus (Mouse).